We begin with the raw amino-acid sequence, 1995 residues long: Myosin-14 (1995 aa).

Residues 1–46 (MAAVTMSVPGRKAPPRPGPVPEAAQPFLFTPRGPSAGGGPGSGTSP) are disordered. Ala-2 is subject to N-acetylalanine. In terms of domain architecture, Myosin N-terminal SH3-like spans 51–101 (TARRLVWVPSELHGFEAAALRDEGEEEAEVELAESGRRLRLPRDQIQRMNP). Ser-60 bears the Phosphoserine mark. Residues 105 to 800 (SKAEDMAELT…VLAQLEEERD (696 aa)) form the Myosin motor domain. 198-205 (GESGAGKT) contacts ATP. The actin-binding stretch occupies residues 678–700 (LSRLMATLSNTNPSFVRCIVPNH). The 30-residue stretch at 803–832 (VTDIIVSFQAAARGYLARRAFQKRQQQQSA) folds into the IQ domain. The stretch at 862–1947 (LQVTRQDEVL…VTTLRNRLRR (1086 aa)) forms a coiled coil. Thr-1194 carries the phosphothreonine modification. Disordered stretches follow at residues 1371 to 1415 (EEAA…RRAA), 1592 to 1623 (QHER…VERD), 1905 to 1942 (EAEE…TTLR), and 1958 to 1995 (RQVF…AHPQ). Residues 1930–1942 (SAESMNREVTTLR) show a composition bias toward polar residues. Residues Ser-1969, Ser-1980, Ser-1983, and Ser-1989 each carry the phosphoserine modification. Residues 1981–1995 (GPSPEPEGSPPAHPQ) show a composition bias toward pro residues.

The protein belongs to the TRAFAC class myosin-kinesin ATPase superfamily. Myosin family. In terms of assembly, myosin is a hexameric protein that consists of 2 heavy chain subunits (MHC), 2 alkali light chain subunits (MLC) and 2 regulatory light chain subunits (MLC-2). As to expression, high levels of expression are found in brain (highest in corpus callosum), heart, kidney, liver, lung, small intestine, colon and skeletal muscle. Expression is low in organs composed mainly of smooth muscle, such as aorta, uterus and urinary bladder. No detectable expression is found in thymus, spleen, placenta and lymphocytes.

In terms of biological role, cellular myosin that appears to play a role in cytokinesis, cell shape, and specialized functions such as secretion and capping. This chain is Myosin-14 (MYH14), found in Homo sapiens (Human).